The primary structure comprises 354 residues: Putrescine/cadaverine-binding protein (354 aa).

The N-terminal stretch at 1-20 (MMKKLLLVATLMAGAAQATA) is a signal peptide.

Belongs to the bacterial solute-binding protein 1 family.

The protein localises to the periplasm. Its function is as follows. Binds putrescine and cadaverine. The protein is Putrescine/cadaverine-binding protein of Pseudomonas aeruginosa (strain ATCC 15692 / DSM 22644 / CIP 104116 / JCM 14847 / LMG 12228 / 1C / PRS 101 / PAO1).